We begin with the raw amino-acid sequence, 303 residues long: MTENPVSDRLSTAAEKASVLIEALPWLQRFHGATVVVKYGGNAMIDDELKTAFAQDMVFLRLAGLHPVVVHGGGPQITAMLERLGMQGEFRGGLRVTTPETMDVVRMVLFGQVGRELVGLINQHGPHAVGMSGEDAGLFTARRRTATVDGEAVDVGLVGDVVSVNPDAVLDLIRAGRIPVVSTIAPDPDGVVHNVNADTAAGALAEALGAEKLVVLTDVEGLYTDWPDRSSLVTRLDADELEALLPGLASGMVPKMEACLRAVRGGVPRAHVIDGRLAHSVLLEVFTSAGVGTMVLPAGTGEK.

Substrate is bound by residues 73-74, Arg95, and Asn194; that span reads GG.

It belongs to the acetylglutamate kinase family. ArgB subfamily.

It is found in the cytoplasm. The catalysed reaction is N-acetyl-L-glutamate + ATP = N-acetyl-L-glutamyl 5-phosphate + ADP. The protein operates within amino-acid biosynthesis; L-arginine biosynthesis; N(2)-acetyl-L-ornithine from L-glutamate: step 2/4. In terms of biological role, catalyzes the ATP-dependent phosphorylation of N-acetyl-L-glutamate. The polypeptide is Acetylglutamate kinase (Saccharopolyspora erythraea (strain ATCC 11635 / DSM 40517 / JCM 4748 / NBRC 13426 / NCIMB 8594 / NRRL 2338)).